A 215-amino-acid chain; its full sequence is Probable GTP-binding protein EngB (215 aa).

In terms of domain architecture, EngB-type G spans 31–215; it reads GPPEIAFAGR…RAAILQAIAV (185 aa). Residues 39-46, 66-70, 93-96, 160-163, and 194-196 contribute to the GTP site; these read GRSNVGKS, GRTQE, DMPG, TKSD, and TSS. The Mg(2+) site is built by serine 46 and threonine 68.

It belongs to the TRAFAC class TrmE-Era-EngA-EngB-Septin-like GTPase superfamily. EngB GTPase family. The cofactor is Mg(2+).

In terms of biological role, necessary for normal cell division and for the maintenance of normal septation. The protein is Probable GTP-binding protein EngB of Bartonella quintana (strain Toulouse) (Rochalimaea quintana).